The chain runs to 306 residues: GTP cyclohydrolase FolE2 (306 aa).

It belongs to the GTP cyclohydrolase IV family.

It carries out the reaction GTP + H2O = 7,8-dihydroneopterin 3'-triphosphate + formate + H(+). It functions in the pathway cofactor biosynthesis; 7,8-dihydroneopterin triphosphate biosynthesis; 7,8-dihydroneopterin triphosphate from GTP: step 1/1. Converts GTP to 7,8-dihydroneopterin triphosphate. This is GTP cyclohydrolase FolE2 from Xanthomonas oryzae pv. oryzae (strain MAFF 311018).